We begin with the raw amino-acid sequence, 176 residues long: Ribosome rescue factor SmrB (176 aa).

A Smr domain is found at 97-172 (LDMHGMTQQE…GDGALLVLLS (76 aa)).

Belongs to the SmrB family. In terms of assembly, associates with collided ribosomes, but not with correctly translating polysomes.

In terms of biological role, acts as a ribosome collision sensor. Detects stalled/collided disomes (pairs of ribosomes where the leading ribosome is stalled and a second ribosome has collided with it) and endonucleolytically cleaves mRNA at the 5' boundary of the stalled ribosome. Stalled/collided disomes form a new interface (primarily via the 30S subunits) that binds SmrB. Cleaved mRNA becomes available for tmRNA ligation, leading to ribosomal subunit dissociation and rescue of stalled ribosomes. The polypeptide is Ribosome rescue factor SmrB (Vibrio vulnificus (strain CMCP6)).